The sequence spans 150 residues: Putative HTH-type transcriptional regulator rrf2-like (150 aa).

Residues 1–139 (MITQKMKYAL…DSLTLEDMLA (139 aa)) form the HTH rrf2-type domain.

This Rhodobacter capsulatus (strain ATCC BAA-309 / NBRC 16581 / SB1003) protein is Putative HTH-type transcriptional regulator rrf2-like.